The following is a 75-amino-acid chain: UPF0154 protein SERP0914 (75 aa).

The helical transmembrane segment at 3–23 threads the bilayer; the sequence is IWVAIILIVIALIAGLIGGFL.

This sequence belongs to the UPF0154 family.

Its subcellular location is the membrane. The sequence is that of UPF0154 protein SERP0914 from Staphylococcus epidermidis (strain ATCC 35984 / DSM 28319 / BCRC 17069 / CCUG 31568 / BM 3577 / RP62A).